Consider the following 677-residue polypeptide: Methionine--tRNA ligase (677 aa).

The short motif at 15 to 25 (PYANGPIHIGH) is the 'HIGH' region element. The Zn(2+) site is built by C146, C149, C159, and C162. The 'KMSKS' region motif lies at 332–336 (KMSKS). K335 contributes to the ATP binding site. Positions 576-677 (DFAKVDLRVA…DGAKPGMRIM (102 aa)) constitute a tRNA-binding domain.

Belongs to the class-I aminoacyl-tRNA synthetase family. MetG type 1 subfamily. As to quaternary structure, homodimer. Zn(2+) is required as a cofactor.

It localises to the cytoplasm. It carries out the reaction tRNA(Met) + L-methionine + ATP = L-methionyl-tRNA(Met) + AMP + diphosphate. Its function is as follows. Is required not only for elongation of protein synthesis but also for the initiation of all mRNA translation through initiator tRNA(fMet) aminoacylation. The polypeptide is Methionine--tRNA ligase (Idiomarina loihiensis (strain ATCC BAA-735 / DSM 15497 / L2-TR)).